The chain runs to 285 residues: Cytochrome P450 monooxygenase eupD (285 aa).

The first 19 residues, 1–19 (MSIAGLVTTLPWLMNMLRA), serve as a signal peptide directing secretion. Residue Cys229 participates in heme binding.

It belongs to the cytochrome P450 family. Heme is required as a cofactor.

It functions in the pathway secondary metabolite biosynthesis; terpenoid biosynthesis. Functionally, cytochrome P450 monooxygenase; part of the gene cluster that mediates the biosynthesis of eupenifeldin, a bistropolone meroterpenoid that acts as an antitumor agent. The first step of eupenifeldin biosynthesis is the biosynthesis of 3-methylorcinaldehyde performed by the non-reducing polyketide synthase eupA. Oxidative dearomatization of 3-methylorcinaldehyde likely catalyzed by the FAD-dependent monooxygenase eupB is followed by oxidative ring expansion by the 2-oxoglutarate-dependent dioxygenase eupC to provide the first tropolone metabolite, tropolone stipitaldehyde. In parallel, generation of sesquiterpene alpha-humulene from farnesylpyrophosphate (FPP) is catalyzed by the terpene cyclase eupE. The cytochrome P450 monooxygenase eupD then hydroxylates humulene to humulenol. The putative Diels-Alderase eupF probably catalyzes the formation of the tropolone-humulene skeleton by linking humulenol and the polyketide moiety. The short-chain dehydrogenase/reductase eupG and the flavin-dependent monooxygenase eupH are also essential for eupenifeldin biosynthesis and are likely the additional decorating enzymes of the tropolone-humulene skeleton to produce final eupenifeldin or derivatives. This Phoma sp protein is Cytochrome P450 monooxygenase eupD.